We begin with the raw amino-acid sequence, 461 residues long: Transcriptional activator RocR (461 aa).

4-aspartylphosphate is present on D57. Residues 143 to 372 form the Sigma-54 factor interaction domain; that stretch reads ILGTSPAIQD…EHMIEGAMNF (230 aa). ATP contacts are provided by residues 171-178 and 233-242; these read GETGTGKE and AHGGTLLLDE. The segment at residues 434 to 453 is a DNA-binding region (H-T-H motif); sequence ISKAAQELGISRQSLQYRLK.

In terms of biological role, positive regulator of arginine catabolism. Controls the transcription of the two operons rocABC and rocDEF and probably acts by binding to the corresponding upstream activating sequences. This is Transcriptional activator RocR (rocR) from Bacillus subtilis (strain 168).